Consider the following 564-residue polypeptide: Dihydroxy-acid dehydratase (564 aa).

Cys53 contributes to the [2Fe-2S] cluster binding site. Asp85 provides a ligand contact to Mg(2+). Cys126 serves as a coordination point for [2Fe-2S] cluster. Asp127 and Lys128 together coordinate Mg(2+). At Lys128 the chain carries N6-carboxylysine. Cys203 is a [2Fe-2S] cluster binding site. Residue Glu454 coordinates Mg(2+). The active-site Proton acceptor is Ser480.

Belongs to the IlvD/Edd family. In terms of assembly, homodimer. The cofactor is [2Fe-2S] cluster. Requires Mg(2+) as cofactor.

It carries out the reaction (2R)-2,3-dihydroxy-3-methylbutanoate = 3-methyl-2-oxobutanoate + H2O. The enzyme catalyses (2R,3R)-2,3-dihydroxy-3-methylpentanoate = (S)-3-methyl-2-oxopentanoate + H2O. The protein operates within amino-acid biosynthesis; L-isoleucine biosynthesis; L-isoleucine from 2-oxobutanoate: step 3/4. It participates in amino-acid biosynthesis; L-valine biosynthesis; L-valine from pyruvate: step 3/4. Functionally, functions in the biosynthesis of branched-chain amino acids. Catalyzes the dehydration of (2R,3R)-2,3-dihydroxy-3-methylpentanoate (2,3-dihydroxy-3-methylvalerate) into 2-oxo-3-methylpentanoate (2-oxo-3-methylvalerate) and of (2R)-2,3-dihydroxy-3-methylbutanoate (2,3-dihydroxyisovalerate) into 2-oxo-3-methylbutanoate (2-oxoisovalerate), the penultimate precursor to L-isoleucine and L-valine, respectively. This chain is Dihydroxy-acid dehydratase, found in Leifsonia xyli subsp. xyli (strain CTCB07).